The chain runs to 344 residues: tRNA (guanine(26)-N(2))-dimethyltransferase (344 aa).

Residues 1–334 (MIVREGSAEI…ASCDLVESLM (334 aa)) enclose the Trm1 methyltransferase domain. S-adenosyl-L-methionine-binding residues include arginine 35, arginine 60, and glutamate 76.

This sequence belongs to the class I-like SAM-binding methyltransferase superfamily. Trm1 family.

The catalysed reaction is guanosine(26) in tRNA + 2 S-adenosyl-L-methionine = N(2)-dimethylguanosine(26) in tRNA + 2 S-adenosyl-L-homocysteine + 2 H(+). Functionally, dimethylates a single guanine residue at position 26 of a number of tRNAs using S-adenosyl-L-methionine as donor of the methyl groups. This Thermoplasma acidophilum (strain ATCC 25905 / DSM 1728 / JCM 9062 / NBRC 15155 / AMRC-C165) protein is tRNA (guanine(26)-N(2))-dimethyltransferase.